The chain runs to 385 residues: Glucans biosynthesis protein C (385 aa).

10 consecutive transmembrane segments (helical) span residues 17-39 (AWLM…TWHV), 54-76 (FIHS…MLFL), 88-110 (VERV…FIML), 136-158 (LISH…WIFK), 179-198 (LSVI…RTIF), 213-235 (IVMQ…IFPH), 242-261 (TPSR…YLLN), 276-295 (SVIT…SFGH), 308-330 (FVNA…GAYI), and 334-356 (ITSN…IILY).

This sequence belongs to the acyltransferase 3 family. OpgC subfamily.

The protein localises to the cell membrane. Its pathway is glycan metabolism; osmoregulated periplasmic glucan (OPG) biosynthesis. Functionally, necessary for the succinyl substitution of periplasmic glucans. Could catalyze the transfer of succinyl residues from the cytoplasmic side of the membrane to the nascent glucan backbones on the periplasmic side of the membrane. The protein is Glucans biosynthesis protein C of Escherichia coli O157:H7.